The chain runs to 275 residues: Gap junction gamma-3 protein (275 aa).

At 1-22 (MCGSFLRRVAAEESRHPTPVGR) the chain is on the cytoplasmic side. Residues 23–43 (LLLPALLGLRLVLLAAGGTGV) traverse the membrane as a helical segment. The Extracellular segment spans residues 44–77 (FGGGEEQSEFVCHTQQAGCKAVCYDAFHPLSPLR). A helical membrane pass occupies residues 78 to 98 (FWAFQVTLVAVPSALYMGFIL). The Cytoplasmic portion of the chain corresponds to 99–134 (YHVIWHWEASEKVKTEEETLSQGEKGGEASRAGSSR). The chain crosses the membrane as a helical span at residues 135–155 (LLWAYVAQLGVRLALEGAALG). The Extracellular portion of the chain corresponds to 156–196 (GQYHLYGFRMPSSFVCRLEPCLGSTNCYLSRPSEKSIFLKT). A helical membrane pass occupies residues 197–217 (MFGVTGLCLLFTLLELVLLGL). Over 218-275 (GRWWRIWRHKSPSSNYSPTSQSAKRCKAPTDNFPVVEIRERPGEAGERGSEVPLSARP) the chain is Cytoplasmic. Over residues 254–267 (EIRERPGEAGERGS) the composition is skewed to basic and acidic residues. The tract at residues 254–275 (EIRERPGEAGERGSEVPLSARP) is disordered.

The protein belongs to the connexin family. Gamma-type subfamily. As to quaternary structure, a connexon is composed of a hexamer of connexins.

The protein localises to the cell membrane. The protein resides in the cell junction. It is found in the gap junction. Its function is as follows. One gap junction consists of a cluster of closely packed pairs of transmembrane channels, the connexons, through which materials of low MW diffuse from one cell to a neighboring cell. The chain is Gap junction gamma-3 protein (GJC3) from Bos taurus (Bovine).